Consider the following 60-residue polypeptide: Large ribosomal subunit protein bL32 (60 aa).

Positions 1-16 (MAVPKRKTTPSKRGMR) are enriched in basic residues. The disordered stretch occupies residues 1 to 60 (MAVPKRKTTPSKRGMRRSADALKQPAYVENPDSGELHRPHHVDLKSGMYRGKQILKPKGE). Residues 34–44 (GELHRPHHVDL) show a composition bias toward basic and acidic residues.

It belongs to the bacterial ribosomal protein bL32 family.

The polypeptide is Large ribosomal subunit protein bL32 (Parvibaculum lavamentivorans (strain DS-1 / DSM 13023 / NCIMB 13966)).